The following is a 347-amino-acid chain: tRNA pseudouridine synthase D (347 aa).

Catalysis depends on D81, which acts as the Nucleophile. A TRUD domain is found at 158 to 305 (GVPNYFGSQR…RHDRREIALK (148 aa)).

This sequence belongs to the pseudouridine synthase TruD family.

The enzyme catalyses uridine(13) in tRNA = pseudouridine(13) in tRNA. Functionally, responsible for synthesis of pseudouridine from uracil-13 in transfer RNAs. In Vibrio parahaemolyticus serotype O3:K6 (strain RIMD 2210633), this protein is tRNA pseudouridine synthase D.